The sequence spans 179 residues: Small ribosomal subunit protein uS5 (179 aa).

One can recognise an S5 DRBM domain in the interval 22 to 85 (MIEKLVAVNR…EYARKTMANV (64 aa)).

The protein belongs to the universal ribosomal protein uS5 family. In terms of assembly, part of the 30S ribosomal subunit. Contacts proteins S4 and S8.

Its function is as follows. With S4 and S12 plays an important role in translational accuracy. Located at the back of the 30S subunit body where it stabilizes the conformation of the head with respect to the body. The protein is Small ribosomal subunit protein uS5 of Xylella fastidiosa (strain 9a5c).